Consider the following 687-residue polypeptide: Translation initiation factor IF-2 (687 aa).

The tr-type G domain occupies 186 to 355 (KRPPIVTVMG…LLTAEMLELK (170 aa)). The interval 195–202 (GHVDHGKT) is G1. 195 to 202 (GHVDHGKT) contributes to the GTP binding site. Residues 220-224 (GITQH) form a G2 region. Residues 241 to 244 (DTPG) form a G3 region. Residues 241–245 (DTPGH) and 295–298 (NKID) each bind GTP. The tract at residues 295 to 298 (NKID) is G4. The segment at 331 to 333 (SAK) is G5.

Belongs to the TRAFAC class translation factor GTPase superfamily. Classic translation factor GTPase family. IF-2 subfamily.

The protein resides in the cytoplasm. One of the essential components for the initiation of protein synthesis. Protects formylmethionyl-tRNA from spontaneous hydrolysis and promotes its binding to the 30S ribosomal subunits. Also involved in the hydrolysis of GTP during the formation of the 70S ribosomal complex. The polypeptide is Translation initiation factor IF-2 (Clostridium botulinum (strain Alaska E43 / Type E3)).